A 904-amino-acid chain; its full sequence is Disintegrin and metalloproteinase domain-containing protein 22 (904 aa).

A signal peptide spans 1–23 (MQAAAAASFWLLCVLGTCPLARC). A propeptide spanning residues 24–223 (GRAGVASLKG…LKPRLKRRKR (200 aa)) is cleaved from the precursor. The Extracellular segment spans residues 24-734 (GRAGVASLKG…LSGNGVAGTN (711 aa)). N-linked (GlcNAc...) asparagine glycosylation occurs at N163. Positions 237 to 436 (KYIELMIVND…GGGACLFNKP (200 aa)) constitute a Peptidase M12B domain. Intrachain disulfides connect C347/C431, C390/C415, C392/C399, C445/C475, C456/C472, C458/C464, C471/C492, C483/C489, C488/C514, C501/C521, C508/C540, C533/C545, C552/C603, C567/C633, C581/C591, C598/C661, and C655/C666. In terms of domain architecture, Disintegrin spans 442 to 529 (PPECGNGFIE…QCAPNVHKMD (88 aa)). Residue N517 is glycosylated (N-linked (GlcNAc...) asparagine). N632 carries an N-linked (GlcNAc...) asparagine glycan. N673 is a glycosylation site (N-linked (GlcNAc...) asparagine). In terms of domain architecture, EGF-like spans 673–710 (NFSTCSSSKAGTVCSGNGVCSNELKCVCNRHWTGADCG). 3 cysteine pairs are disulfide-bonded: C677–C692, C686–C698, and C700–C709. Residues 735–755 (IIIGIIAGTILVLALILGITA) traverse the membrane as a helical segment. Residues 756 to 857 (WGYKNYREQR…RFRPRSNSTE (102 aa)) are Cytoplasmic-facing. Positions 769–904 (QGDYVKKPGD…QSARLWETSI (136 aa)) are disordered. Low complexity predominate over residues 789-808 (GGSTNSASSSKKRSNGLSHS). S808, K817, and S832 each carry phosphoserine. The segment covering 809–827 (WSERIPDTKHISDICENGR) has biased composition (basic and acidic residues). Residues 840 to 851 (NKKKIRGKRFRP) are compositionally biased toward basic residues. 5 positions are modified to phosphoserine: S855, S860, S864, S868, and M882. The segment covering 860 to 875 (SPAKSPSSSTGSIASS) has biased composition (low complexity).

Interacts with LGI1. Can bind to LGI4. Interacts with KCNA2, DLG2 and DLG4. Interacts with ADAM11. Interacts (via C-terminus) with YWHAB/14-3-3 beta. Interacts (via C-terminus) with YWHAZ/14-3-3 zeta. In terms of processing, the precursor is cleaved by a furin endopeptidase. In terms of tissue distribution, detected in juxtaparanodal zones in the central nervous system and at nerve terminal plexuses of basket cells in the cerebellum (at protein level). Expressed at high levels in the brain. Strongly expressed in cerebellar granule cells and hippocampus. In spinal cord, expression is restricted to gray matter.

The protein localises to the cell membrane. Its subcellular location is the cell projection. It localises to the axon. In terms of biological role, probable ligand for integrin in the brain. This is a non catalytic metalloprotease-like protein. Involved in regulation of cell adhesion and spreading and in inhibition of cell proliferation. Neuronal receptor for LGI1. The chain is Disintegrin and metalloproteinase domain-containing protein 22 (Adam22) from Mus musculus (Mouse).